The chain runs to 278 residues: Dehydrogenase/reductase SDR family member 4 (278 aa).

Position 36 to 60 (36 to 60 (LVTASTDGIGFAIARRLAQDGAHVV)) interacts with NADP(+). Lys92 is modified (N6-acetyllysine; alternate). The residue at position 92 (Lys92) is an N6-succinyllysine; alternate. Lys105 is subject to N6-acetyllysine. A Phosphoserine modification is found at Ile140. Ser169 serves as a coordination point for substrate. The Proton acceptor role is filled by Tyr182. Lys186 is a binding site for NADP(+). Position 216 is an N6-acetyllysine; alternate (Lys216). Lys216 bears the N6-succinyllysine; alternate mark. Ser220 is modified (phosphoserine). An N6-succinyllysine mark is found at Lys227 and Lys234. Positions 276–278 (SRL) match the Peroxisomal targeting signal motif.

Belongs to the short-chain dehydrogenases/reductases (SDR) family. As to quaternary structure, homotetramer. Predominantly expressed in normal cervix (at protein level). In terms of tissue distribution, expressed in some neoplastic cervical tissues, but not in normal cervix (at protein level). As to expression, expressed in a few neoplastic cervical tissues. High expression in liver.

Its subcellular location is the peroxisome. The protein localises to the nucleus. The catalysed reaction is a secondary alcohol + NADP(+) = a ketone + NADPH + H(+). It catalyses the reaction 3beta-hydroxy-5beta-pregnane-20-one + NADP(+) = 5beta-pregnan-3,20-dione + NADPH + H(+). The enzyme catalyses 5beta-dihydrotestosterone + NADPH + H(+) = 5beta-androstane-3beta,17beta-diol + NADP(+). It carries out the reaction 5beta-androstane-3,17-dione + NADPH + H(+) = 3beta-hydroxy-5beta-androstane-17-one + NADP(+). The catalysed reaction is isatin + NADPH + H(+) = 3-hydroxyindolin-2-one + NADP(+). It catalyses the reaction lithocholate + NADP(+) = 3-oxo-5beta-cholan-24-oate + NADPH + H(+). The enzyme catalyses 3-oxo-5beta-cholan-24-oate + NADPH + H(+) = isolithocholate + NADP(+). With respect to regulation, inhibited by flavonoids (quercetin and genistein), cetylpyridium chloride, phenylhexane and valproic acid. Low inhibition is observed with fatty acids (myristic acid and lauric acid). No significant inhibition is observed with barbital, dicumarol, indomethacin, metyrapone, ethacrynic acid, disulfiram, hexestrol and benzodiazepines (diazepam and nitrazepam). Functionally, NADPH-dependent oxidoreductase which catalyzes the reduction of a variety of compounds bearing carbonyl groups including ketosteroids, alpha-dicarbonyl compounds, aldehydes, aromatic ketones and quinones. Reduces 3-ketosteroids and benzil into 3beta-hydroxysteroids and R-benzoin, respectively, in contrast to the stereoselectivity of non-primate DHRS4s which produce 3alpha-hydroxysteroids and S-benzoin. Diplays low activity toward all-trans-retinal and no activity toward 9-cis-retinal as compared to non-primate mammals. In the reverse reaction, catalyze the NAD-dependent oxidation of 3beta-hydroxysteroids and alcohol, but with much lower efficiency. Involved in the metabolism of 3beta-hydroxysteroids, isatin and xenobiotic carbonyl compounds. Its function is as follows. No detected catalytic activity in vitro, possibly due to the lack of catalytic site. In terms of biological role, NADPH-dependent oxidoreductase which catalyzes the reduction of a variety of compounds bearing carbonyl groups including ketosteroids, alpha-dicarbonyl compounds, aldehydes, aromatic ketones and quinones. Involved in the metabolism of 3beta-hydroxysteroids, isatin and xenobiotic carbonyl compounds. Has a higher catalytic activity for xenobiotic alpha-dicarbonyl compounds, sucha as benzil, than isoform 1 and is involved in benzil detoxification. In Homo sapiens (Human), this protein is Dehydrogenase/reductase SDR family member 4.